The sequence spans 186 residues: Elongation factor P (186 aa).

Belongs to the elongation factor P family.

The protein localises to the cytoplasm. The protein operates within protein biosynthesis; polypeptide chain elongation. In terms of biological role, involved in peptide bond synthesis. Stimulates efficient translation and peptide-bond synthesis on native or reconstituted 70S ribosomes in vitro. Probably functions indirectly by altering the affinity of the ribosome for aminoacyl-tRNA, thus increasing their reactivity as acceptors for peptidyl transferase. The polypeptide is Elongation factor P (Maridesulfovibrio salexigens (strain ATCC 14822 / DSM 2638 / NCIMB 8403 / VKM B-1763) (Desulfovibrio salexigens)).